The chain runs to 263 residues: Acyl-[acyl-carrier-protein]--UDP-N-acetylglucosamine O-acyltransferase (263 aa).

Belongs to the transferase hexapeptide repeat family. LpxA subfamily. As to quaternary structure, homotrimer.

The protein resides in the cytoplasm. The enzyme catalyses a (3R)-hydroxyacyl-[ACP] + UDP-N-acetyl-alpha-D-glucosamine = a UDP-3-O-[(3R)-3-hydroxyacyl]-N-acetyl-alpha-D-glucosamine + holo-[ACP]. The protein operates within glycolipid biosynthesis; lipid IV(A) biosynthesis; lipid IV(A) from (3R)-3-hydroxytetradecanoyl-[acyl-carrier-protein] and UDP-N-acetyl-alpha-D-glucosamine: step 1/6. Its function is as follows. Involved in the biosynthesis of lipid A, a phosphorylated glycolipid that anchors the lipopolysaccharide to the outer membrane of the cell. The chain is Acyl-[acyl-carrier-protein]--UDP-N-acetylglucosamine O-acyltransferase from Campylobacter jejuni subsp. jejuni serotype O:6 (strain 81116 / NCTC 11828).